A 506-amino-acid chain; its full sequence is Glutamate--tRNA ligase (506 aa).

The short motif at 29–39 is the 'HIGH' region element; sequence PSPTGTPHVGL. Positions 273–277 match the 'KMSKS' region motif; the sequence is KLSKR. Residue lysine 276 coordinates ATP.

This sequence belongs to the class-I aminoacyl-tRNA synthetase family. Glutamate--tRNA ligase type 1 subfamily. Monomer.

It localises to the cytoplasm. The enzyme catalyses tRNA(Glu) + L-glutamate + ATP = L-glutamyl-tRNA(Glu) + AMP + diphosphate. Its function is as follows. Catalyzes the attachment of glutamate to tRNA(Glu) in a two-step reaction: glutamate is first activated by ATP to form Glu-AMP and then transferred to the acceptor end of tRNA(Glu). In Paenarthrobacter aurescens (strain TC1), this protein is Glutamate--tRNA ligase.